Consider the following 185-residue polypeptide: Biogenesis of lysosome-related organelles complex 1 subunit 5 (185 aa).

The segment at 1-25 (MSGGGTETPVACDAAQGGKKRDSLG) is disordered. An N-acetylserine modification is found at Ser-2.

This sequence belongs to the BLOC1S5 family. In terms of assembly, octamer composed of one copy each BLOC1S1, BLOC1S2, BLOC1S3, BLOC1S4, BLOC1S5, BLOC1S6, DTNBP1/BLOC1S7 and SNAPIN/BLOC1S8. Component of the biogenesis of lysosome-related organelles complex 1 (BLOC-1) composed of BLOC1S1, BLOC1S2, BLOC1S3, BLOC1S4, BLOC1S5, BLOC1S6, DTNBP1/BLOC1S7 and SNAPIN/BLOC1S8. The BLOC-1 complex associates with the AP-3 protein complex and membrane protein cargos. Interacts with BLOC1S4, BLOC1S6, DTNBP1/BLOC1S7 and PI4K2A. In terms of tissue distribution, detected in heart, brain, spleen, lung, kidney and testis.

In terms of biological role, component of the BLOC-1 complex, a complex that is required for normal biogenesis of lysosome-related organelles (LRO), such as platelet dense granules and melanosomes. In concert with the AP-3 complex, the BLOC-1 complex is required to target membrane protein cargos into vesicles assembled at cell bodies for delivery into neurites and nerve terminals. The BLOC-1 complex, in association with SNARE proteins, is also proposed to be involved in neurite extension. Plays a role in intracellular vesicle trafficking. This Mus musculus (Mouse) protein is Biogenesis of lysosome-related organelles complex 1 subunit 5 (Bloc1s5).